The following is an 842-amino-acid chain: Alanine--tRNA ligase (842 aa).

Zn(2+) contacts are provided by His-549, His-553, Cys-650, and His-654.

Belongs to the class-II aminoacyl-tRNA synthetase family. Zn(2+) serves as cofactor.

Its subcellular location is the cytoplasm. The enzyme catalyses tRNA(Ala) + L-alanine + ATP = L-alanyl-tRNA(Ala) + AMP + diphosphate. In terms of biological role, catalyzes the attachment of alanine to tRNA(Ala) in a two-step reaction: alanine is first activated by ATP to form Ala-AMP and then transferred to the acceptor end of tRNA(Ala). Also edits incorrectly charged Ser-tRNA(Ala) and Gly-tRNA(Ala) via its editing domain. The protein is Alanine--tRNA ligase of Campylobacter jejuni (strain RM1221).